Here is a 126-residue protein sequence, read N- to C-terminus: Fluoride-specific ion channel FluC (126 aa).

4 helical membrane-spanning segments follow: residues 5–25, 36–56, 69–89, and 99–119; these read GFVAVGVGAAVGAWLRWFFSV, YGTLASNLVGGYLIGLAVAFF, LAVTGFLGGLTTFSTFSSEVI, and WAMLHLAMHLGGSLLLTAFGI. Positions 76 and 79 each coordinate Na(+).

It belongs to the fluoride channel Fluc/FEX (TC 1.A.43) family.

It is found in the cell inner membrane. It carries out the reaction fluoride(in) = fluoride(out). Na(+) is not transported, but it plays an essential structural role and its presence is essential for fluoride channel function. Its function is as follows. Fluoride-specific ion channel. Important for reducing fluoride concentration in the cell, thus reducing its toxicity. The polypeptide is Fluoride-specific ion channel FluC (Cupriavidus metallidurans (strain ATCC 43123 / DSM 2839 / NBRC 102507 / CH34) (Ralstonia metallidurans)).